Reading from the N-terminus, the 352-residue chain is Lipid storage droplets surface-binding protein 2 (352 aa).

Disordered regions lie at residues 1–28 and 298–352; these read MASAEQKHATGNGTTGNGTAMNDVDQPK and NVEQ…VSSQ. A compositionally biased stretch (polar residues) spans 298–309; the sequence is NVEQSGGSSSDA. Low complexity predominate over residues 315-329; sequence TTTSTTTTTTTSSTS.

This sequence belongs to the perilipin family. Ubiquitous expression in early embryos. At stage 5 expression is restricted to the pole cells. At stage 11 expression is seen in the amnioserosa, refined to the fat body and midgut by stage 14. Also seen in the hindgut by the end of embryogenesis. Expression is seen in larval fat body (at protein level).

The protein localises to the cytoplasm. It is found in the lipid droplet. Functionally, essential for embryogenesis. Required for normal deposition of neutral lipids in the oocyte. The polypeptide is Lipid storage droplets surface-binding protein 2 (Drosophila melanogaster (Fruit fly)).